Consider the following 80-residue polypeptide: Progonadoliberin-1 (80 aa).

Positions 1-21 (MGIKRALWWMVVCVVVLQVSA) are cleaved as a signal peptide. Pyrrolidone carboxylic acid is present on Gln-22. Residue Gly-31 is modified to Glycine amide.

This sequence belongs to the GnRH family.

Its subcellular location is the secreted. Functionally, stimulates the secretion of gonadotropins. The polypeptide is Progonadoliberin-1 (gnrh1) (Clarias gariepinus (North African catfish)).